The sequence spans 357 residues: (+)-eremophilene synthase (357 aa).

Mg(2+)-binding residues include D100 and E105. The DDXXE motif motif lies at 100-105 (DDDFDE). R198 is a binding site for substrate. Mg(2+) is bound by residues N244 and S248. K251 is a substrate binding site. D252 is a Mg(2+) binding site. 331-332 (RY) provides a ligand contact to substrate.

This sequence belongs to the terpene synthase family. Requires Mg(2+) as cofactor.

The catalysed reaction is (2E,6E)-farnesyl diphosphate = (+)-eremophilene + diphosphate. Its pathway is secondary metabolite biosynthesis; terpenoid biosynthesis. Functionally, catalyzes the conversion of (2E,6E)-farnesyl diphosphate (FPP) to yield the bicyclic sesquiterpene eremophilene via a 1,10-cyclization, which requires the abstraction of the pyrophosphate from FPP to yield the (E,E)-germacradienyl cation. The only accepted substrate is farnesyl diphosphate (FPP). In Gibberella fujikuroi (strain CBS 195.34 / IMI 58289 / NRRL A-6831) (Bakanae and foot rot disease fungus), this protein is (+)-eremophilene synthase.